We begin with the raw amino-acid sequence, 402 residues long: Baeyer-Villiger oxidase notM (402 aa).

This sequence belongs to the questin oxidase family.

In terms of biological role, baeyer-Villiger oxidase; part of the gene cluster that mediates the biosynthesis of notoamide, a fungal indole alkaloid that belongs to a family of natural products containing a characteristic bicyclo[2.2.2]diazaoctane core. The first step of notoamide biosynthesis involves coupling of L-proline and L-tryptophan by the bimodular NRPS notE, to produce cyclo-L-tryptophan-L-proline called brevianamide F. The reverse prenyltransferase notF then acts as a deoxybrevianamide E synthase and converts brevianamide F to deoxybrevianamide E via reverse prenylation at C-2 of the indole ring leading to the bicyclo[2.2.2]diazaoctane core. Deoxybrevianamide E is further hydroxylated at C-6 of the indole ring, likely catalyzed by the cytochrome P450 monooxygenase notG, to yield 6-hydroxy-deoxybrevianamide E. 6-hydroxy-deoxybrevianamide E is a specific substrate of the prenyltransferase notC for normal prenylation at C-7 to produce 6-hydroxy-7-prenyl-deoxybrevianamide, also called notoamide S. As the proposed pivotal branching point in notoamide biosynthesis, notoamide S can be diverted to notoamide E through an oxidative pyran ring closure putatively catalyzed by either notH cytochrome P450 monooxygenase or the notD FAD-linked oxidoreductase. This step would be followed by an indole 2,3-epoxidation-initiated pinacol-like rearrangement catalyzed by the notB FAD-dependent monooxygenase leading to the formation of notoamide C and notoamide D. On the other hand notoamide S is converted to notoamide T by notH (or notD), a bifunctional oxidase that also functions as the intramolecular Diels-Alderase responsible for generation of (+)-notoamide T. To generate antipodal (-)-notoaminide T, notH' (or notD') in Aspergillus versicolor is expected to catalyze a Diels-Alder reaction leading to the opposite stereochemistry. The remaining oxidoreductase notD (or notH) likely catalyzes the oxidative pyran ring formation to yield (+)-stephacidin A. The FAD-dependent monooxygenase notI is highly similar to notB and is predicted to catalyze a similar conversion from (+)-stephacidin A to (-)-notoamide B via the 2,3-epoxidation of (+)-stephacidin A followed by a pinacol-type rearrangement. Finally, it remains unclear which enzyme could be responsible for the final hydroxylation steps leading to notoamide A and sclerotiamide. The function of notM in the notoamide biosynthesis has not been determined yet. The chain is Baeyer-Villiger oxidase notM from Aspergillus sp. (strain MF297-2).